The primary structure comprises 105 residues: Putative membrane protein insertion efficiency factor (105 aa).

This sequence belongs to the UPF0161 family.

Its subcellular location is the cell inner membrane. Could be involved in insertion of integral membrane proteins into the membrane. The polypeptide is Putative membrane protein insertion efficiency factor (Nitratidesulfovibrio vulgaris (strain DSM 19637 / Miyazaki F) (Desulfovibrio vulgaris)).